The sequence spans 68 residues: Large ribosomal subunit protein uL29 (68 aa).

It belongs to the universal ribosomal protein uL29 family.

The protein is Large ribosomal subunit protein uL29 of Methanobrevibacter smithii (strain ATCC 35061 / DSM 861 / OCM 144 / PS).